The chain runs to 154 residues: Putative pre-16S rRNA nuclease (154 aa).

The protein belongs to the YqgF nuclease family.

It localises to the cytoplasm. Could be a nuclease involved in processing of the 5'-end of pre-16S rRNA. The protein is Putative pre-16S rRNA nuclease of Rickettsia africae (strain ESF-5).